The following is a 179-amino-acid chain: NAD(P)H-quinone oxidoreductase subunit I, chloroplastic (179 aa).

4Fe-4S ferredoxin-type domains lie at 55–84 (GRIH…VDWR) and 95–124 (LNYS…MTEE). The [4Fe-4S] cluster site is built by Cys64, Cys67, Cys70, Cys74, Cys104, Cys107, Cys110, and Cys114.

This sequence belongs to the complex I 23 kDa subunit family. In terms of assembly, NDH is composed of at least 16 different subunits, 5 of which are encoded in the nucleus. It depends on [4Fe-4S] cluster as a cofactor.

The protein localises to the plastid. It localises to the chloroplast thylakoid membrane. It carries out the reaction a plastoquinone + NADH + (n+1) H(+)(in) = a plastoquinol + NAD(+) + n H(+)(out). The catalysed reaction is a plastoquinone + NADPH + (n+1) H(+)(in) = a plastoquinol + NADP(+) + n H(+)(out). NDH shuttles electrons from NAD(P)H:plastoquinone, via FMN and iron-sulfur (Fe-S) centers, to quinones in the photosynthetic chain and possibly in a chloroplast respiratory chain. The immediate electron acceptor for the enzyme in this species is believed to be plastoquinone. Couples the redox reaction to proton translocation, and thus conserves the redox energy in a proton gradient. The protein is NAD(P)H-quinone oxidoreductase subunit I, chloroplastic of Nuphar advena (Common spatterdock).